The following is a 139-amino-acid chain: Gene 22 protein (139 aa).

In Mycobacterium phage D29 (Mycobacteriophage D29), this protein is Gene 22 protein (22).